A 107-amino-acid polypeptide reads, in one-letter code: Sperm-specific class P protein 31 (107 aa).

Positions 1 to 107 (MINIDPPSGD…GEVVVKMVAS (107 aa)) constitute an MSP domain.

Expressed at higher level in testis.

The protein is Sperm-specific class P protein 31 (ssp-31) of Caenorhabditis elegans.